The sequence spans 306 residues: Ornithine carbamoyltransferase 1, anabolic (306 aa).

Residues 53–56 (STRT), Gln80, Arg104, and 131–134 (HPCQ) contribute to the carbamoyl phosphate site. L-ornithine is bound by residues Asn162, Asp219, and 223–224 (SM). Carbamoyl phosphate contacts are provided by residues 259–260 (CL) and Arg287.

This sequence belongs to the aspartate/ornithine carbamoyltransferase superfamily. OTCase family. Homotrimer.

The protein localises to the cytoplasm. The enzyme catalyses carbamoyl phosphate + L-ornithine = L-citrulline + phosphate + H(+). It functions in the pathway amino-acid biosynthesis; L-arginine biosynthesis; L-arginine from L-ornithine and carbamoyl phosphate: step 1/3. With respect to regulation, reversibly inhibited by inhibited by phaseolotoxin and octicidine. In terms of biological role, reversibly catalyzes the transfer of the carbamoyl group from carbamoyl phosphate (CP) to the N(epsilon) atom of ornithine (ORN) to produce L-citrulline, which is a substrate for argininosuccinate synthetase, the enzyme involved in the final step in arginine biosynthesis. This chain is Ornithine carbamoyltransferase 1, anabolic, found in Pseudomonas savastanoi pv. phaseolicola (Pseudomonas syringae pv. phaseolicola).